The primary structure comprises 334 residues: Probable 3-hydroxyisobutyrate dehydrogenase-like 1, mitochondrial (334 aa).

Residues 1 to 23 constitute a mitochondrion transit peptide; the sequence is MPLLLRRFPSPSVVSSFFLRRSM. A24 is modified (N-acetylalanine). Residues 38 to 67 and T133 each bind NAD(+); that span reads TKIG…TVFN. The active site involves K207. K275 provides a ligand contact to NAD(+).

This sequence belongs to the HIBADH-related family. 3-hydroxyisobutyrate dehydrogenase subfamily.

The protein localises to the mitochondrion. It carries out the reaction 3-hydroxy-2-methylpropanoate + NAD(+) = 2-methyl-3-oxopropanoate + NADH + H(+). Its pathway is amino-acid degradation; L-valine degradation. This chain is Probable 3-hydroxyisobutyrate dehydrogenase-like 1, mitochondrial, found in Arabidopsis thaliana (Mouse-ear cress).